We begin with the raw amino-acid sequence, 313 residues long: Olfactory receptor 1G1 (313 aa).

At Met1–Lys25 the chain is on the extracellular side. An N-linked (GlcNAc...) asparagine glycan is attached at Asn5. The chain crosses the membrane as a helical span at residues Ala26–Ile49. Topologically, residues Ile50 to Thr57 are cytoplasmic. Residues Pro58–Pro79 form a helical membrane-spanning segment. The Extracellular segment spans residues Lys80–Gln100. An intrachain disulfide couples Cys97 to Cys189. Residues Leu101 to Tyr120 form a helical membrane-spanning segment. Topologically, residues Asp121 to Leu140 are cytoplasmic. A helical membrane pass occupies residues Cys141–Leu158. Over His159–Glu196 the chain is Extracellular. Residues Leu197–Thr219 form a helical membrane-spanning segment. Over Asn220–Lys236 the chain is Cytoplasmic. The chain crosses the membrane as a helical span at residues Ala237 to Tyr259. Residues Phe260 to Thr272 lie on the Extracellular side of the membrane. Residues Val273–Leu292 form a helical membrane-spanning segment. Topologically, residues Arg293–Pro313 are cytoplasmic.

It belongs to the G-protein coupled receptor 1 family.

The protein resides in the cell membrane. Functionally, odorant receptor. In Gorilla gorilla gorilla (Western lowland gorilla), this protein is Olfactory receptor 1G1 (OR1G1).